Consider the following 707-residue polypeptide: 65-kDa microtubule-associated protein 3 (707 aa).

5 coiled-coil regions span residues 49–84, 157–179, 269–289, 354–374, and 464–486; these read LEVYRRKVDQANRCRAQLRQAIADAEAQLAAICSAM, NLSMRKLEELHCQLQVLQKEKID, QQEYQHITCNIAASEHEITEA, IVDATMVLEHLEQHISKIKEE, and LEEYNILRQEREEEHRRQRDQKK. A disordered region spans residues 495 to 574; it reads QEALYGSKPS…PSRKQSMNPS (80 aa). Over residues 500-512 the composition is skewed to low complexity; that stretch reads GSKPSPSKPLGGK. Phosphoserine is present on residues serine 504 and serine 528.

This sequence belongs to the MAP65/ASE1 family. In terms of assembly, forms a dimer. Binds to microtubules (MT) during cell division. Bundles polymerized MT via the formation of 25-nm crossbridges with centrally located endocytic MT, and midline phragmoplast MT. Expressed in all tissues enriched in dividing cells, such as the root and shoot apical meristem, foliar primordia, and young leaves, and embryos.

It is found in the nucleus. Its subcellular location is the cytoplasm. The protein resides in the cytoskeleton. The protein localises to the phragmoplast. Microtubule-associated protein that plays a critical role in organizing the mitotic microtubule array during both early and late mitosis in all plant organs. Essential for the cytokinesis, especially in roots, by maintaining the integrity of the overlapped microtubules in the phragmoplast. Required during root morphogenesis. Needed for giant cell development during root knot nematode infection, where cytokinesis is initiated but not completed. The polypeptide is 65-kDa microtubule-associated protein 3 (MAP65-3) (Arabidopsis thaliana (Mouse-ear cress)).